Consider the following 233-residue polypeptide: Purine nucleoside phosphorylase DeoD-type (233 aa).

Position 4 (histidine 4) interacts with a purine D-ribonucleoside. Residues glycine 20, arginine 24, arginine 43, and arginine 87–threonine 90 contribute to the phosphate site. A purine D-ribonucleoside-binding positions include glutamate 179–glutamate 181 and serine 203–aspartate 204. The active-site Proton donor is the aspartate 204.

It belongs to the PNP/UDP phosphorylase family. Homohexamer; trimer of homodimers.

It carries out the reaction a purine D-ribonucleoside + phosphate = a purine nucleobase + alpha-D-ribose 1-phosphate. It catalyses the reaction a purine 2'-deoxy-D-ribonucleoside + phosphate = a purine nucleobase + 2-deoxy-alpha-D-ribose 1-phosphate. Its function is as follows. Catalyzes the reversible phosphorolytic breakdown of the N-glycosidic bond in the beta-(deoxy)ribonucleoside molecules, with the formation of the corresponding free purine bases and pentose-1-phosphate. This Helicobacter acinonychis (strain Sheeba) protein is Purine nucleoside phosphorylase DeoD-type.